Here is a 397-residue protein sequence, read N- to C-terminus: Elongation factor Tu (397 aa).

The region spanning 10–207 is the tr-type G domain; sequence KPHVNIGTIG…AVDESIPEPV (198 aa). The segment at 19–26 is G1; the sequence is GHVDHGKT. 19 to 26 provides a ligand contact to GTP; it reads GHVDHGKT. Threonine 26 provides a ligand contact to Mg(2+). The interval 63 to 67 is G2; sequence GITIN. A G3 region spans residues 84 to 87; it reads DAPG. Residues 84-88 and 139-142 each bind GTP; these read DAPGH and NKSD. The G4 stretch occupies residues 139–142; sequence NKSD. A G5 region spans residues 177–179; the sequence is SGL.

The protein belongs to the TRAFAC class translation factor GTPase superfamily. Classic translation factor GTPase family. EF-Tu/EF-1A subfamily. As to quaternary structure, monomer.

The protein resides in the cytoplasm. It catalyses the reaction GTP + H2O = GDP + phosphate + H(+). In terms of biological role, GTP hydrolase that promotes the GTP-dependent binding of aminoacyl-tRNA to the A-site of ribosomes during protein biosynthesis. The sequence is that of Elongation factor Tu from Clavibacter michiganensis subsp. michiganensis (strain NCPPB 382).